We begin with the raw amino-acid sequence, 249 residues long: 3-deoxy-D-manno-octulosonic acid kinase (249 aa).

Asp-175 is an active-site residue.

This sequence belongs to the protein kinase superfamily. KdkA/RfaP family.

The protein resides in the cell inner membrane. It carries out the reaction an alpha-Kdo-(2-&gt;6)-lipid IVA + ATP = a 4-O-phospho-alpha-Kdo-(2-&gt;6)-lipid IVA + ADP + H(+). The protein operates within bacterial outer membrane biogenesis; LPS core biosynthesis. Catalyzes the ATP-dependent phosphorylation of the 3-deoxy-D-manno-octulosonic acid (Kdo) residue in Kdo-lipid IV(A) at the 4-OH position. The chain is 3-deoxy-D-manno-octulosonic acid kinase from Xanthomonas euvesicatoria pv. vesicatoria (strain 85-10) (Xanthomonas campestris pv. vesicatoria).